The chain runs to 368 residues: MSLFGTTSGFGTSGTSMFGSTTTDNHNPMKDIEVTSSPDDSIGCLSFSPPTLPGNFLIAGSWANDVRCWEVQDSGQTIPKAQQMHTGPVLDVCWSDDGSKVFTASCDKTAKMWDLNSNQAIQIAQHDAPVKTIHWIKAPNYSCVMTGSWDKTLKFWDTRSSNPMMVLQLPERCYCADVIYPMAVVATAERGLIVYQLENQPSEFRRIESPLKHQHRCVAIFKDKQNKPTGFALGSIEGRVAIHYINPPNPAKDNFTFKCHRSNGTNTSAPQDIYAVNGIAFHPVHGTLATVGSDGRFSFWDKDARTKLKTSEQLDQPISACCFNHNGNIFAYASSYDWSKGHEFYNPQKKNYIFLRNAAEELKPRNKK.

Residues Thr-15–Val-34 are disordered. WD repeat units follow at residues Ser-37–Pro-79, Met-84–Asp-114, Gln-125–Asp-157, Gln-168–Arg-206, His-215–Phe-255, Gln-271–Asp-301, and Thr-310–Asn-346. Thr-229 carries the phosphothreonine modification.

The protein belongs to the WD repeat rae1 family. Interacts with NUMA1 (via N-terminal end of the coiled-coil domain); this interaction promotes spindle formation in mitosis. Interacts with NUP98. Interacts with MYCBP2. Interacts with USP11.

The protein resides in the cytoplasm. It is found in the nucleus. It localises to the cytoskeleton. The protein localises to the spindle pole. In terms of biological role, plays a role in mitotic bipolar spindle formation. Binds mRNA. May function in nucleocytoplasmic transport and in directly or indirectly attaching cytoplasmic mRNPs to the cytoskeleton. In Sus scrofa (Pig), this protein is mRNA export factor (RAE1).